The chain runs to 214 residues: Redox-sensing transcriptional repressor Rex (214 aa).

The H-T-H motif DNA-binding region spans Leu16 to Phe55. Gly90–Gly95 lines the NAD(+) pocket.

Belongs to the transcriptional regulatory Rex family. Homodimer.

It localises to the cytoplasm. Functionally, modulates transcription in response to changes in cellular NADH/NAD(+) redox state. In Lactobacillus gasseri (strain ATCC 33323 / DSM 20243 / BCRC 14619 / CIP 102991 / JCM 1131 / KCTC 3163 / NCIMB 11718 / NCTC 13722 / AM63), this protein is Redox-sensing transcriptional repressor Rex.